Reading from the N-terminus, the 225-residue chain is Cytochrome b6-f complex iron-sulfur subunit, chloroplastic (225 aa).

Residues 1-46 (MASTALSTASNPTQLCRSRASLGKPVKGLGFGRERVPRTATTITCQ) constitute a chloroplast transit peptide. A helical membrane pass occupies residues 69-89 (LLGAISLPTVGMLVPYGAFFI). The Rieske domain occupies 112-208 (AEEWLKTHGP…ADVDDGKVLF (97 aa)). C154, H156, C172, and H175 together coordinate [2Fe-2S] cluster. A disulfide bond links C159 and C174.

This sequence belongs to the Rieske iron-sulfur protein family. As to quaternary structure, the 4 large subunits of the cytochrome b6-f complex are cytochrome b6, subunit IV (17 kDa polypeptide, petD), cytochrome f and the Rieske protein, while the 4 small subunits are petG, petL, petM and petN. The complex functions as a dimer. [2Fe-2S] cluster is required as a cofactor.

The protein localises to the plastid. The protein resides in the chloroplast thylakoid membrane. It catalyses the reaction 2 oxidized [plastocyanin] + a plastoquinol + 2 H(+)(in) = 2 reduced [plastocyanin] + a plastoquinone + 4 H(+)(out). Its function is as follows. Component of the cytochrome b6-f complex, which mediates electron transfer between photosystem II (PSII) and photosystem I (PSI), cyclic electron flow around PSI, and state transitions. In Oryza sativa subsp. japonica (Rice), this protein is Cytochrome b6-f complex iron-sulfur subunit, chloroplastic (petC).